The sequence spans 1703 residues: Gingipain R1 (1703 aa).

The signal sequence occupies residues Met-1–Ala-20. Residues Gln-21–Arg-224 constitute a propeptide that is removed on maturation. 7 residues coordinate Ca(2+): Asp-302, Val-324, Asp-327, Tyr-329, Glu-331, Glu-385, and His-390. The active-site Proton donor is the His-435. The active-site Nucleophile is Cys-468. Ca(2+)-binding residues include Phe-473, Glu-482, Asp-516, Glu-517, Glu-520, and His-526. The interval Trp-940 to Phe-968 is disordered. Pro residues predominate over residues Thr-946–Asn-958.

It belongs to the peptidase C25 family.

Its subcellular location is the secreted. The catalysed reaction is Hydrolysis of proteins and small molecule substrates, with a preference for Arg in P1.. In terms of biological role, thiol protease. Acts synergistically with RgpB to catalyze the maturation of fimbrial subunits, such as FimA. Its proteolytic activity is a major factor in both periodontal tissue destruction and in evasion of host defense mechanisms. In Porphyromonas gingivalis (strain ATCC 33277 / DSM 20709 / CIP 103683 / JCM 12257 / NCTC 11834 / 2561), this protein is Gingipain R1.